Here is a 307-residue protein sequence, read N- to C-terminus: uncharacterized protein (307 aa).

This is an uncharacterized protein from Caenorhabditis elegans.